The sequence spans 392 residues: O-phospho-L-seryl-tRNA:Cys-tRNA synthase 2 (392 aa).

Pyridoxal 5'-phosphate is bound by residues 85-86 (AR), Asn190, and 213-215 (SGH). Lys216 bears the N6-(pyridoxal phosphate)lysine mark.

Belongs to the SepCysS family. In terms of assembly, homodimer. Interacts with SepRS. The cofactor is pyridoxal 5'-phosphate.

It carries out the reaction O-phospho-L-seryl-tRNA(Cys) + hydrogen sulfide + H(+) = L-cysteinyl-tRNA(Cys) + phosphate. In terms of biological role, converts O-phospho-L-seryl-tRNA(Cys) (Sep-tRNA(Cys)) to L-cysteinyl-tRNA(Cys) (Cys-tRNA(Cys)). The protein is O-phospho-L-seryl-tRNA:Cys-tRNA synthase 2 of Methanocorpusculum labreanum (strain ATCC 43576 / DSM 4855 / Z).